Consider the following 410-residue polypeptide: Transposase for insertion sequence element IS801 (410 aa).

This sequence belongs to the transposase 32 family.

Functionally, involved in the transposition of the insertion sequence. This is Transposase for insertion sequence element IS801 from Pseudomonas savastanoi pv. phaseolicola (Pseudomonas syringae pv. phaseolicola).